We begin with the raw amino-acid sequence, 979 residues long: Oncostatin-M-specific receptor subunit beta (979 aa).

The N-terminal stretch at 1–27 is a signal peptide; that stretch reads MALFAVFQTTFFLTLLSLRTYQSEVLA. Topologically, residues 28–740 are extracellular; sequence ERLPLTPVSL…VTTPDEHSSM (713 aa). The N-linked (GlcNAc...) asparagine glycan is linked to asparagine 163. The cysteines at positions 245 and 255 are disulfide-linked. Asparagine 326 and asparagine 380 each carry an N-linked (GlcNAc...) asparagine glycan. 4 consecutive Fibronectin type-III domains span residues 335–428, 433–528, 529–623, and 625–736; these read NPFS…TLEA, APDV…DPEN, KEVE…SQEL, and PSDN…TPDE. A WSXWS motif motif is present at residues 415–419; that stretch reads WSEWS. 2 N-linked (GlcNAc...) asparagine glycosylation sites follow: asparagine 446 and asparagine 580. Residues 741–761 traverse the membrane as a helical segment; that stretch reads LIHILLPMVFCVLLIMVMCYL. The Cytoplasmic segment spans residues 762–979; it reads KSQWIKETCY…TLLDPGEHYC (218 aa). The short motif at 770-778 is the Box 1 motif element; that stretch reads CYPDIPDPY. Residues serine 826 and serine 889 each carry the phosphoserine modification.

The protein belongs to the type I cytokine receptor family. Type 2 subfamily. In terms of assembly, heterodimer composed of OSMR and IL6ST (type II OSM receptor). Heterodimer with IL31RA to form the IL31 receptor. In terms of tissue distribution, expressed in keratinocytes (at protein level). Expressed at relatively high levels in all neural cells as well as fibroblast and epithelial cells.

The protein localises to the membrane. In terms of biological role, associates with IL31RA to form the IL31 receptor. Binds IL31 to activate STAT3 and possibly STAT1 and STAT5. Capable of transducing OSM-specific signaling events. The polypeptide is Oncostatin-M-specific receptor subunit beta (OSMR) (Homo sapiens (Human)).